The chain runs to 242 residues: Hairy and enhancer of split-related protein HELT (242 aa).

The 56-residue stretch at 10 to 65 (RTPVSHKVIEKRRRDRINRCLNELGKTVPMALAKQSSGKLEKAEILEMTVQYLRAL) folds into the bHLH domain. The residue at position 48 (Lys-48) is an N6-acetyllysine. Positions 87 to 122 (FHYGYHECMKNLVHYLTTVERMETKDTKYARILAFL) constitute an Orange domain.

It belongs to the HEY family. As to quaternary structure, self-associates. Interacts with HES5 and HEY2.

It is found in the nucleus. Transcriptional repressor which binds preferentially to the canonical E box sequence 5'-CACGCG-3'. This is Hairy and enhancer of split-related protein HELT (HELT) from Homo sapiens (Human).